We begin with the raw amino-acid sequence, 295 residues long: Phosphonoacetaldehyde hydrolase (295 aa).

Asp-36 serves as the catalytic Nucleophile. Asp-36 and Ala-38 together coordinate Mg(2+). Lys-78 acts as the Schiff-base intermediate with substrate in catalysis. A Mg(2+)-binding site is contributed by Asp-212.

The protein belongs to the HAD-like hydrolase superfamily. PhnX family. As to quaternary structure, homodimer. The cofactor is Mg(2+).

It catalyses the reaction phosphonoacetaldehyde + H2O = acetaldehyde + phosphate + H(+). In terms of biological role, involved in phosphonate degradation. The polypeptide is Phosphonoacetaldehyde hydrolase (Psychromonas ingrahamii (strain DSM 17664 / CCUG 51855 / 37)).